Reading from the N-terminus, the 1193-residue chain is Tubulin monoglutamylase TTLL4 (1193 aa).

2 disordered regions span residues methionine 1–serine 37 and valine 468–leucine 535. The segment covering proline 24–glutamate 34 has biased composition (polar residues). A compositionally biased stretch (basic and acidic residues) spans glutamine 472–aspartate 482. Positions glutamate 502–glutamate 515 are enriched in acidic residues. The TTL domain occupies arginine 599–serine 942. The residue at position 686 (serine 686) is a Phosphoserine. Residues lysine 716, arginine 722–glycine 723, glutamine 744–leucine 747, and lysine 757–aspartate 759 contribute to the ATP site. Residue arginine 722 participates in a protein binding. Residue arginine 783 coordinates L-glutamate. An ATP-binding site is contributed by threonine 804–asparagine 805. 3 residues coordinate L-glutamate: tyrosine 806, serine 807, and lysine 828. Aspartate 888, glutamate 901, and asparagine 903 together coordinate Mg(2+). The interval proline 913–serine 1027 is c-MTBD region. An L-glutamate-binding site is contributed by lysine 919. The span at serine 943 to serine 960 shows a compositional bias: low complexity. Disordered stretches follow at residues serine 943–glutamine 966 and methionine 1092–serine 1193. Polar residues-rich tracts occupy residues methionine 1092 to asparagine 1102 and serine 1131 to lysine 1153. Positions serine 1168–serine 1182 are enriched in low complexity. Over residues valine 1183–serine 1193 the composition is skewed to polar residues.

This sequence belongs to the tubulin--tyrosine ligase family. Requires Mg(2+) as cofactor. Highly expressed in testis. Expressed in brain, heart, kidney, liver, lung, muscle and spleen. In the brain, expressed in ependymal cilia, the cortex and the striatum. Expressed in blastomere.

The protein resides in the cytoplasm. It is found in the cell projection. It localises to the cilium. Its subcellular location is the cytoskeleton. The protein localises to the cilium basal body. The enzyme catalyses L-glutamyl-[protein] + L-glutamate + ATP = gamma-L-glutamyl-L-glutamyl-[protein] + ADP + phosphate + H(+). Functionally, monoglutamylase which modifies both tubulin and non-tubulin proteins, adding a single glutamate on the gamma-carboxyl group of specific glutamate residues of target proteins. Involved in the side-chain initiation step of the polyglutamylation reaction but not in the elongation step. Preferentially modifies beta-tail tubulin over the alpha-tubulin. Monoglutamylates nucleosome assembly proteins NAP1L1 and NAP1L4. Monoglutamylates nucleotidyltransferase CGAS, leading to inhibition of CGAS catalytic activity, thereby preventing antiviral defense function. Involved in KLF4 glutamylation which impedes its ubiquitination, thereby leading to somatic cell reprogramming, pluripotency maintenance and embryogenesis. This Mus musculus (Mouse) protein is Tubulin monoglutamylase TTLL4.